A 184-amino-acid polypeptide reads, in one-letter code: Signal peptidase complex subunit 3 (184 aa).

Topologically, residues 1–14 (MFSFVQRFQNVSNQ) are cytoplasmic. A helical; Signal-anchor for type II membrane protein transmembrane segment spans residues 15–35 (AFSMGIVMVVFIMASSYYQLI). Topologically, residues 36–184 (NNNAFSVPSN…TLTVENKNKV (149 aa)) are lumenal. N-linked (GlcNAc...) asparagine glycosylation is found at Asn-102 and Asn-173.

It belongs to the SPCS3 family. Component of the signal peptidase complex (SPC) composed of a catalytic subunit SEC11 and three accessory subunits SPC1, SPC2 and SPC3. The complex induces a local thinning of the ER membrane which is used to measure the length of the signal peptide (SP) h-region of protein substrates. This ensures the selectivity of the complex towards h-regions shorter than 18-20 amino acids. Interacts with SEC11. SPC associates with the translocon complex.

It is found in the endoplasmic reticulum membrane. In terms of biological role, essential component of the signal peptidase complex (SPC) which catalyzes the cleavage of N-terminal signal sequences from nascent proteins as they are translocated into the lumen of the endoplasmic reticulum. Essential for the SPC catalytic activity, possibly by stabilizing and positioning the active center of the complex close to the lumenal surface. Essential for viability. In Saccharomyces cerevisiae (strain ATCC 204508 / S288c) (Baker's yeast), this protein is Signal peptidase complex subunit 3 (SPC3).